A 1288-amino-acid polypeptide reads, in one-letter code: VWFA and cache domain-containing protein 1 (1288 aa).

An N-terminal signal peptide occupies residues 1-49 (MAREPEEEETVRPAAVVRRCPRCPGWPGAPRPPLWLLCLVACWILGAVA). The Extracellular segment spans residues 50-1109 (DADFSILDEA…ITLNMIKSAP (1060 aa)). Residue Asn-159 is glycosylated (N-linked (GlcNAc...) asparagine). The region spanning 242-457 (HIVVILDHGA…TTVGRFYTNL (216 aa)) is the VWFA domain. 2 Cache domains span residues 467-546 (FSLP…SEPP) and 786-867 (LTGP…HPTL). Residues 1110 to 1130 (VGPVAGGIMGCIMVLVLAVYA) form a helical membrane-spanning segment. At 1131-1288 (YRHQIHRRSH…VTVHTVDAEC (158 aa)) the chain is on the cytoplasmic side. Disordered regions lie at residues 1157–1176 (NLEN…RGII) and 1187–1237 (ERHV…VDVG). Over residues 1159–1174 (ENDRDERDDDSHEDRG) the composition is skewed to basic and acidic residues. Residues 1210–1229 (GYSTMSPQEDSENPPCNNDP) show a composition bias toward polar residues.

The protein belongs to the calcium channel subunit alpha-2/delta family.

The protein localises to the membrane. Its function is as follows. May regulate voltage-dependent calcium channels. The sequence is that of VWFA and cache domain-containing protein 1 (Cachd1) from Mus musculus (Mouse).